Consider the following 188-residue polypeptide: Large ribosomal subunit protein uL5 (188 aa).

It belongs to the universal ribosomal protein uL5 family. Part of the 50S ribosomal subunit; part of the 5S rRNA/L5/L18/L25 subcomplex. Contacts the 5S rRNA and the P site tRNA. Forms a bridge to the 30S subunit in the 70S ribosome.

In terms of biological role, this is one of the proteins that bind and probably mediate the attachment of the 5S RNA into the large ribosomal subunit, where it forms part of the central protuberance. In the 70S ribosome it contacts protein S13 of the 30S subunit (bridge B1b), connecting the 2 subunits; this bridge is implicated in subunit movement. Contacts the P site tRNA; the 5S rRNA and some of its associated proteins might help stabilize positioning of ribosome-bound tRNAs. This is Large ribosomal subunit protein uL5 from Aquifex pyrophilus.